Consider the following 143-residue polypeptide: Large ribosomal subunit protein uL11 (143 aa).

It belongs to the universal ribosomal protein uL11 family. As to quaternary structure, part of the ribosomal stalk of the 50S ribosomal subunit. Interacts with L10 and the large rRNA to form the base of the stalk. L10 forms an elongated spine to which L12 dimers bind in a sequential fashion forming a multimeric L10(L12)X complex. One or more lysine residues are methylated.

In terms of biological role, forms part of the ribosomal stalk which helps the ribosome interact with GTP-bound translation factors. This is Large ribosomal subunit protein uL11 from Rhizobium etli (strain ATCC 51251 / DSM 11541 / JCM 21823 / NBRC 15573 / CFN 42).